A 370-amino-acid polypeptide reads, in one-letter code: Dihydroorotate dehydrogenase (370 aa).

Substrate is bound by residues K82, 135-139, and N200; that span reads NSFGM. FMN is bound at residue 82 to 83; sequence KT. N200 provides a ligand contact to FMN. Catalysis depends on C203, which acts as the Nucleophile. Residues K241 and I269 each contribute to the FMN site. 270–271 is a substrate binding site; sequence NT. Residues G297, 328–329, and 350–351 each bind FMN; these read GG and AT.

This sequence belongs to the dihydroorotate dehydrogenase family. FMN is required as a cofactor.

It carries out the reaction (S)-dihydroorotate + A = orotate + AH2. The protein operates within pyrimidine metabolism; UMP biosynthesis via de novo pathway. Its function is as follows. Catalyzes the conversion of dihydroorotate to orotate. Participates in the pyrimidine biosynthetic pathway. The polypeptide is Dihydroorotate dehydrogenase (pyr4) (Dictyostelium discoideum (Social amoeba)).